Here is a 258-residue protein sequence, read N- to C-terminus: Ribose-5-phosphate isomerase (258 aa).

This sequence belongs to the ribose 5-phosphate isomerase family.

The protein localises to the cytoplasm. The enzyme catalyses aldehydo-D-ribose 5-phosphate = D-ribulose 5-phosphate. The protein operates within carbohydrate degradation; pentose phosphate pathway; D-ribose 5-phosphate from D-ribulose 5-phosphate (non-oxidative stage): step 1/1. The sequence is that of Ribose-5-phosphate isomerase (RKI1) from Saccharomyces cerevisiae (strain YJM789) (Baker's yeast).